Reading from the N-terminus, the 71-residue chain is Metallothionein-like protein 1 (71 aa).

Belongs to the metallothionein superfamily. Type 15 family.

Its function is as follows. Metallothioneins have a high content of cysteine residues that bind various heavy metals. The chain is Metallothionein-like protein 1 (MT1) from Casuarina glauca (Swamp oak).